A 186-amino-acid polypeptide reads, in one-letter code: Ribosome-recycling factor (186 aa).

Residues Asp135–Met164 form a disordered region.

This sequence belongs to the RRF family.

The protein resides in the cytoplasm. In terms of biological role, responsible for the release of ribosomes from messenger RNA at the termination of protein biosynthesis. May increase the efficiency of translation by recycling ribosomes from one round of translation to another. This Sinorhizobium medicae (strain WSM419) (Ensifer medicae) protein is Ribosome-recycling factor.